We begin with the raw amino-acid sequence, 93 residues long: Large ribosomal subunit protein bL31B (93 aa).

It belongs to the bacterial ribosomal protein bL31 family. Type B subfamily. In terms of assembly, part of the 50S ribosomal subunit.

The sequence is that of Large ribosomal subunit protein bL31B from Psychrobacter arcticus (strain DSM 17307 / VKM B-2377 / 273-4).